The primary structure comprises 383 residues: Chaperone protein DnaJ (383 aa).

Positions 5–70 constitute a J domain; sequence DYYELLGVEK…QKRAAYDRFG (66 aa). A CR-type zinc finger spans residues 137–215; that stretch reads GKTATVKVPS…CGGSGRTRKE (79 aa). 8 residues coordinate Zn(2+): Cys-150, Cys-153, Cys-167, Cys-170, Cys-189, Cys-192, Cys-203, and Cys-206. 4 CXXCXGXG motif repeats span residues 150-157, 167-174, 189-196, and 203-210; these read CEDCKGTG, CSACHGHG, CPTCQGMG, and CRSCGGSG.

The protein belongs to the DnaJ family. As to quaternary structure, homodimer. It depends on Zn(2+) as a cofactor.

Its subcellular location is the cytoplasm. Participates actively in the response to hyperosmotic and heat shock by preventing the aggregation of stress-denatured proteins and by disaggregating proteins, also in an autonomous, DnaK-independent fashion. Unfolded proteins bind initially to DnaJ; upon interaction with the DnaJ-bound protein, DnaK hydrolyzes its bound ATP, resulting in the formation of a stable complex. GrpE releases ADP from DnaK; ATP binding to DnaK triggers the release of the substrate protein, thus completing the reaction cycle. Several rounds of ATP-dependent interactions between DnaJ, DnaK and GrpE are required for fully efficient folding. Also involved, together with DnaK and GrpE, in the DNA replication of plasmids through activation of initiation proteins. This chain is Chaperone protein DnaJ, found in Paramagnetospirillum magneticum (strain ATCC 700264 / AMB-1) (Magnetospirillum magneticum).